A 482-amino-acid chain; its full sequence is Caspase-8 (482 aa).

Residues 1-218 (MDFHSCLYDI…DMWDSPGEQE (218 aa)) constitute a propeptide that is removed on maturation. 2 consecutive DED domains span residues 2–80 (DFHS…RVLK) and 100–177 (AYRV…RIDD). 2 positions are modified to phosphoserine: Ser188 and Ser213. His319 is a catalytic residue. Position 336 is a phosphotyrosine (Tyr336). Cys362 is an active-site residue. Residues 379–388 (LEQEHVLEED) constitute a propeptide that is removed on maturation. The residue at position 390 (Ser390) is a Phosphoserine; by CDK1.

Belongs to the peptidase C14A family. In terms of assembly, heterotetramer that consists of two anti-parallel arranged heterodimers, each one formed by a 18 kDa (p18) and a 10 kDa (p10) subunit. Component of the death-induced signaling complex (DISC) composed of cell surface receptor FAS/CD95 or TNFRSF1A, adapter protein FADD and the CASP8 protease; recruitment of CASP8 to the complex is required for processing of CASP8 into the p18 and p10 subunits. Component of the AIM2 PANoptosome complex, a multiprotein complex that drives inflammatory cell death (PANoptosis). Interacts with CFLAR and PEA15. Interacts with RFFL and RNF34; negatively regulate CASP8 through proteasomal degradation. Interacts with TNFAIP8L2. Interacts with CASP8AP2. Interacts with NOL3; decreases CASP8 activity in a mitochondria localization- and phosphorylation-dependent manner and this interaction is dissociated by calcium. Interacts with UBR2. Interacts with RIPK1. Interacts with stimulated TNFRSF10B; this interaction is followed by CASP8 proteolytic cleavage and activation. In terms of processing, generation of the subunits requires association with the death-inducing signaling complex (DISC), whereas additional processing is likely due to the autocatalytic activity of the activated protease. GZMB and CASP10 can be involved in these processing events. Phosphorylation on Ser-389 during mitosis by CDK1 inhibits activation by proteolysis and prevents apoptosis. This phosphorylation occurs in cancer cell lines, as well as in primary breast tissues and lymphocytes.

It is found in the cytoplasm. The protein localises to the nucleus. The catalysed reaction is Strict requirement for Asp at position P1 and has a preferred cleavage sequence of (Leu/Asp/Val)-Glu-Thr-Asp-|-(Gly/Ser/Ala).. Its activity is regulated as follows. CASP8 activity is restricted by RIPK1. Functionally, thiol protease that plays a key role in programmed cell death by acting as a molecular switch for apoptosis, necroptosis and pyroptosis, and is required to prevent tissue damage during embryonic development and adulthood. Initiator protease that induces extrinsic apoptosis by mediating cleavage and activation of effector caspases responsible for FAS/CD95-mediated and TNFRSF1A-induced cell death. Cleaves and activates effector caspases CASP3, CASP4, CASP6, CASP7, CASP9 and CASP10. Binding to the adapter molecule FADD recruits it to either receptor FAS/CD95 or TNFRSF1A. The resulting aggregate called the death-inducing signaling complex (DISC) performs CASP8 proteolytic activation. The active dimeric enzyme is then liberated from the DISC and free to activate downstream apoptotic proteases. Proteolytic fragments of the N-terminal propeptide (termed CAP3, CAP5 and CAP6) are likely retained in the DISC. In addition to extrinsic apoptosis, also acts as a negative regulator of necroptosis: acts by cleaving RIPK1 at 'Asp-325', which is crucial to inhibit RIPK1 kinase activity, limiting TNF-induced apoptosis, necroptosis and inflammatory response. Also able to initiate pyroptosis by mediating cleavage and activation of gasdermin-C and -D (GSDMC and GSDMD, respectively): gasdermin cleavage promotes release of the N-terminal moiety that binds to membranes and forms pores, triggering pyroptosis. Initiates pyroptosis following inactivation of MAP3K7/TAK1. Also acts as a regulator of innate immunity by mediating cleavage and inactivation of N4BP1 downstream of TLR3 or TLR4, thereby promoting cytokine production. May participate in the Granzyme B (GZMB) cell death pathways. Cleaves PARP1 and PARP2. This is Caspase-8 from Rattus norvegicus (Rat).